Reading from the N-terminus, the 177-residue chain is MSELSTVARPYAKAAFDFALEQGQLDKWQEMLQFSALVAENEQVVEYITSSLASGQISEIFLQICDDQLDQYGQNFIRVMAENKRLAILPEVFNRFNALRAEYEAIKKVIVVSATELSQAQEEKIAKAMEKRLGQKVRLTTEIDSTLLTGIIIKYDDIVIDGSSRGQLNRLTQALSL.

It belongs to the ATPase delta chain family. F-type ATPases have 2 components, F(1) - the catalytic core - and F(0) - the membrane proton channel. F(1) has five subunits: alpha(3), beta(3), gamma(1), delta(1), epsilon(1). F(0) has three main subunits: a(1), b(2) and c(10-14). The alpha and beta chains form an alternating ring which encloses part of the gamma chain. F(1) is attached to F(0) by a central stalk formed by the gamma and epsilon chains, while a peripheral stalk is formed by the delta and b chains.

Its subcellular location is the cell inner membrane. In terms of biological role, f(1)F(0) ATP synthase produces ATP from ADP in the presence of a proton or sodium gradient. F-type ATPases consist of two structural domains, F(1) containing the extramembraneous catalytic core and F(0) containing the membrane proton channel, linked together by a central stalk and a peripheral stalk. During catalysis, ATP synthesis in the catalytic domain of F(1) is coupled via a rotary mechanism of the central stalk subunits to proton translocation. Its function is as follows. This protein is part of the stalk that links CF(0) to CF(1). It either transmits conformational changes from CF(0) to CF(1) or is implicated in proton conduction. The protein is ATP synthase subunit delta of Haemophilus ducreyi (strain 35000HP / ATCC 700724).